A 257-amino-acid chain; its full sequence is 5'-nucleotidase SurE (257 aa).

A divalent metal cation is bound by residues aspartate 11, aspartate 12, serine 42, and asparagine 99.

The protein belongs to the SurE nucleotidase family. It depends on a divalent metal cation as a cofactor.

The protein resides in the cytoplasm. The enzyme catalyses a ribonucleoside 5'-phosphate + H2O = a ribonucleoside + phosphate. Nucleotidase that shows phosphatase activity on nucleoside 5'-monophosphates. In Flavobacterium psychrophilum (strain ATCC 49511 / DSM 21280 / CIP 103535 / JIP02/86), this protein is 5'-nucleotidase SurE.